Consider the following 601-residue polypeptide: UvrABC system protein C (601 aa).

One can recognise a GIY-YIG domain in the interval threonine 17–isoleucine 95. The 36-residue stretch at serine 204 to valine 239 folds into the UVR domain.

This sequence belongs to the UvrC family. In terms of assembly, interacts with UvrB in an incision complex.

Its subcellular location is the cytoplasm. Functionally, the UvrABC repair system catalyzes the recognition and processing of DNA lesions. UvrC both incises the 5' and 3' sides of the lesion. The N-terminal half is responsible for the 3' incision and the C-terminal half is responsible for the 5' incision. This is UvrABC system protein C from Chromobacterium violaceum (strain ATCC 12472 / DSM 30191 / JCM 1249 / CCUG 213 / NBRC 12614 / NCIMB 9131 / NCTC 9757 / MK).